A 385-amino-acid polypeptide reads, in one-letter code: Aryl-alcohol dehydrogenase [NADP(+)] (385 aa).

Tyr76 (proton donor) is an active-site residue. 238-248 (NVLCAGKIRTD) contacts NADP(+).

This sequence belongs to the aldo/keto reductase family. Aldo/keto reductase 2 subfamily. Post-translationally, the N-terminus is blocked.

The catalysed reaction is an aromatic primary alcohol + NADP(+) = an aromatic aldehyde + NADPH + H(+). In Phanerodontia chrysosporium (White-rot fungus), this protein is Aryl-alcohol dehydrogenase [NADP(+)].